Consider the following 398-residue polypeptide: MAKEKYDRSKPHVNIGTIGHVDHGKTTLTAAITTVLARRLPTSVNQPKDYASIDAAPEERERGITINTAHVEYETETRHYAHIDAPGHADYVKNMITGAAQMDGAILVVASTDGPMPQTREHILLSRQVGVKHLIVFMNKVDLVDDEELLELVEMEIRDLLSEYDFPGDDLPVIQGSALKALEGDSKYEDIIMELMSTVDEYIPEPERDTDKPLLLPVEDVFSITGRGTVASGRIDRGTVRVNDEIEIVGIKEETKKAVVTGVEMFRKQLDEGLAGDNVGILLRGVQRDEIERGQVIAKPGSINPHTKFKGEVYILSKDEGGRHTPFFNNYRPQFYFRTTDVTGSIELPAGTEMVMPGDNVTINVELIHPIAVEQGTTFSIREGGRTVGSGIVSEIEA.

The tr-type G domain occupies 10–207 (KPHVNIGTIG…TVDEYIPEPE (198 aa)). The G1 stretch occupies residues 19–26 (GHVDHGKT). 19–26 (GHVDHGKT) provides a ligand contact to GTP. Thr-26 is a Mg(2+) binding site. Positions 63–67 (GITIN) are G2. A G3 region spans residues 84–87 (DAPG). GTP contacts are provided by residues 84–88 (DAPGH) and 139–142 (NKVD). A G4 region spans residues 139-142 (NKVD). Residues 177-179 (SAL) are G5.

The protein belongs to the TRAFAC class translation factor GTPase superfamily. Classic translation factor GTPase family. EF-Tu/EF-1A subfamily. In terms of assembly, monomer.

The protein localises to the cytoplasm. It catalyses the reaction GTP + H2O = GDP + phosphate + H(+). Its function is as follows. GTP hydrolase that promotes the GTP-dependent binding of aminoacyl-tRNA to the A-site of ribosomes during protein biosynthesis. This chain is Elongation factor Tu, found in Streptococcus pyogenes serotype M49 (strain NZ131).